The primary structure comprises 137 residues: MLQPKRTKYRKQFKGRIKGVAKGGSDLAFGEFGLKAQEPNRVNAREIEAARRAITRHMKRAGRVWIRVFPDVPVTAKPTEVRMGKGKGSVEYWACKVKPGRMMFEIDGVNEELAREALRLGAAKLSVKTRFVQRIAE.

It belongs to the universal ribosomal protein uL16 family. Part of the 50S ribosomal subunit.

In terms of biological role, binds 23S rRNA and is also seen to make contacts with the A and possibly P site tRNAs. The protein is Large ribosomal subunit protein uL16 of Rhizobium meliloti (strain 1021) (Ensifer meliloti).